Reading from the N-terminus, the 574-residue chain is Cytochrome P450 306a1 (574 aa).

Residues 303–314 (EKEQLRQSKEAD) are compositionally biased toward basic and acidic residues. A disordered region spans residues 303 to 333 (EKEQLRQSKEADPSQEQSEADEDDEESDEED). Residues 320 to 333 (SEADEDDEESDEED) show a composition bias toward acidic residues. C505 is a heme binding site.

This sequence belongs to the cytochrome P450 family. It depends on heme as a cofactor. In terms of tissue distribution, first seen at the early (syncytial) blastoderm stage 4. During cellularization of the blastoderm (stage 5), stripes of expression appear and remain through to stage 10. Expression becomes undetectable during germ band retraction (stages 11-14). By stage 15, some expression resumes in the primordium of the ring gland, so that by stage 17 strong expression is seen, but only in the ring gland. This specific localization continues throughout the larval instars (at protein level). Expressed in the prothoracic gland cells of the larval ring gland (RG). Levels decline just after the molt to the third instar then increase later during the wandering stage. Low levels of expression are seen in the larval brain and fat body. In the adult, majority of expression is restricted to the ovaries, with low levels in the head and carcass of both sexes.

The protein resides in the endoplasmic reticulum membrane. It is found in the microsome membrane. The catalysed reaction is 2,22,25-trideoxyecdysone + 2 reduced [adrenodoxin] + O2 + 2 H(+) = 2,22-dideoxyecdysone + 2 oxidized [adrenodoxin] + H2O. It participates in steroid biosynthesis; ecdysteroid biosynthesis. Involved in the metabolism of insect hormones; responsible for ecdysteroid C25-hydroxylase activity. May be involved in the breakdown of synthetic insecticides. In Drosophila melanogaster (Fruit fly), this protein is Cytochrome P450 306a1.